A 775-amino-acid polypeptide reads, in one-letter code: Subtilisin-like protease SBT1.5 (775 aa).

The signal sequence occupies residues 1–19 (MAFFFYFFFLLTLSSPSSS). Residues 20-103 (ASSSNSLTYI…VIPEQVRHLH (84 aa)) constitute a propeptide, activation peptide. Residues 27–103 (TYIVHVDHEA…VIPEQVRHLH (77 aa)) enclose the Inhibitor I9 domain. The 511-residue stretch at 107 to 617 (SPEFLGLRST…SGHVHPTKAM (511 aa)) folds into the Peptidase S8 domain. The active-site Charge relay system is the D137. N-linked (GlcNAc...) asparagine glycosylation is present at N196. The active-site Charge relay system is H210. One can recognise a PA domain in the interval 367-459 (MYPLVYGGSL…VGASGGDEIR (93 aa)). The Charge relay system role is filled by S549. 3 N-linked (GlcNAc...) asparagine glycosylation sites follow: N599, N638, and N762.

The protein belongs to the peptidase S8 family.

The protein resides in the secreted. This is Subtilisin-like protease SBT1.5 from Arabidopsis thaliana (Mouse-ear cress).